We begin with the raw amino-acid sequence, 175 residues long: Polyadenylate-binding protein-interacting protein 6 (175 aa).

Residues T7–P17 carry the PAM2-like motif. Positions E83–I126 constitute a CUE domain. Residues P145–S175 are disordered. Residues G166–S175 show a composition bias toward polar residues.

In Arabidopsis thaliana (Mouse-ear cress), this protein is Polyadenylate-binding protein-interacting protein 6 (CID6).